Here is a 442-residue protein sequence, read N- to C-terminus: MNFFMEKNKDAGHRVTIKIPKTTVNNSLLQEFIKIRKTTKINGFRKGKTPIRVIQEKYGSAIYYDIFKKLMQKFFHEFIKTEKIKIIGSPKFYIHQDEDKKKEYFEYSVIYELYPQFQIKDIKQIKVNKINVEITEEDIKKNIETNKNKKNIWNPVNKAVKSYDRVTINYCIYEKNKKIKKFDKDNISFIVSKNTLIPQLNYKIINHFVNDIIFFKIKFHAFHPEKELQNKDITFKIKIIKIEKKQELESEKSNKKNITEKKTIQTDYQTIKNNLHSQINIITDKYLENQIIQKIVEKNILLLPPLLFQKEIKNLYKQYTKQYQEENSNILEKKYHMSLDSEVKKRLYFQIIIEQIILNNKLFADENNIQKLIKKISSNYKNPMEIIKLYNKNKNLKNTMKNIELERQAMLLLKKSIKIEKQNWNFERFLNYNWASHEELML.

One can recognise a PPIase FKBP-type domain in the interval 163-248 (YDRVTINYCI…IIKIEKKQEL (86 aa)).

It belongs to the FKBP-type PPIase family. Tig subfamily.

It is found in the cytoplasm. The catalysed reaction is [protein]-peptidylproline (omega=180) = [protein]-peptidylproline (omega=0). Functionally, involved in protein export. Acts as a chaperone by maintaining the newly synthesized protein in an open conformation. Functions as a peptidyl-prolyl cis-trans isomerase. This is Trigger factor (tig) from Buchnera aphidicola subsp. Acyrthosiphon pisum (strain APS) (Acyrthosiphon pisum symbiotic bacterium).